A 176-amino-acid polypeptide reads, in one-letter code: Phosphopantetheine adenylyltransferase (176 aa).

Serine 8 serves as a coordination point for substrate. ATP is bound by residues 8–9 (SF) and histidine 16. 3 residues coordinate substrate: lysine 40, threonine 72, and arginine 86. Residues 87–89 (GLR), glutamate 97, and 122–128 (YSFLSSS) each bind ATP.

Belongs to the bacterial CoaD family. In terms of assembly, homohexamer. The cofactor is Mg(2+).

The protein localises to the cytoplasm. The enzyme catalyses (R)-4'-phosphopantetheine + ATP + H(+) = 3'-dephospho-CoA + diphosphate. It functions in the pathway cofactor biosynthesis; coenzyme A biosynthesis; CoA from (R)-pantothenate: step 4/5. Functionally, reversibly transfers an adenylyl group from ATP to 4'-phosphopantetheine, yielding dephospho-CoA (dPCoA) and pyrophosphate. This chain is Phosphopantetheine adenylyltransferase, found in Acaryochloris marina (strain MBIC 11017).